The chain runs to 252 residues: Ribosomal RNA small subunit methyltransferase J (252 aa).

S-adenosyl-L-methionine is bound by residues 101–102 (RD), 117–118 (ER), 153–154 (SS), and aspartate 171.

The protein belongs to the methyltransferase superfamily. RsmJ family.

It is found in the cytoplasm. The catalysed reaction is guanosine(1516) in 16S rRNA + S-adenosyl-L-methionine = N(2)-methylguanosine(1516) in 16S rRNA + S-adenosyl-L-homocysteine + H(+). Its function is as follows. Specifically methylates the guanosine in position 1516 of 16S rRNA. This is Ribosomal RNA small subunit methyltransferase J from Salmonella dublin (strain CT_02021853).